Reading from the N-terminus, the 379-residue chain is Probable leucine aminopeptidase TRV_05286 (379 aa).

The signal sequence occupies residues 1–18 (MKIATLAVVSAFAATAIA). Residues histidine 182 and aspartate 201 each contribute to the Zn(2+) site. Asparagine 202 and asparagine 226 each carry an N-linked (GlcNAc...) asparagine glycan. The Zn(2+) site is built by glutamate 240 and aspartate 267. A disulfide bond links cysteine 312 and cysteine 316. A Zn(2+)-binding site is contributed by histidine 345.

This sequence belongs to the peptidase M28 family. M28E subfamily. In terms of assembly, monomer. It depends on Zn(2+) as a cofactor.

The protein localises to the secreted. Functionally, probable extracellular aminopeptidase which contributes to pathogenicity. In Trichophyton verrucosum (strain HKI 0517), this protein is Probable leucine aminopeptidase TRV_05286.